The sequence spans 536 residues: Light-independent protochlorophyllide reductase subunit B (536 aa).

Asp-36 contributes to the [4Fe-4S] cluster binding site. The Proton donor role is filled by Asp-292. 427–428 lines the substrate pocket; it reads GL. Residues 448–469 are compositionally biased toward low complexity; it reads SHLGHLGGHQSQTEQQQSQAAT. The segment at 448 to 489 is disordered; it reads SHLGHLGGHQSQTEQQQSQAATNPSTQSNADSSSEESPLWTP. A compositionally biased stretch (polar residues) spans 470 to 483; the sequence is NPSTQSNADSSSEE.

Belongs to the ChlB/BchB/BchZ family. In terms of assembly, protochlorophyllide reductase is composed of three subunits; ChlL, ChlN and ChlB. Forms a heterotetramer of two ChlB and two ChlN subunits. It depends on [4Fe-4S] cluster as a cofactor.

The catalysed reaction is chlorophyllide a + oxidized 2[4Fe-4S]-[ferredoxin] + 2 ADP + 2 phosphate = protochlorophyllide a + reduced 2[4Fe-4S]-[ferredoxin] + 2 ATP + 2 H2O. Its pathway is porphyrin-containing compound metabolism; chlorophyll biosynthesis (light-independent). Its function is as follows. Component of the dark-operative protochlorophyllide reductase (DPOR) that uses Mg-ATP and reduced ferredoxin to reduce ring D of protochlorophyllide (Pchlide) to form chlorophyllide a (Chlide). This reaction is light-independent. The NB-protein (ChlN-ChlB) is the catalytic component of the complex. In Prochlorococcus marinus (strain MIT 9313), this protein is Light-independent protochlorophyllide reductase subunit B.